The chain runs to 481 residues: ATP synthase subunit beta, chloroplastic (481 aa).

Position 161 to 168 (161 to 168 (GGAGVGKT)) interacts with ATP.

It belongs to the ATPase alpha/beta chains family. In terms of assembly, F-type ATPases have 2 components, CF(1) - the catalytic core - and CF(0) - the membrane proton channel. CF(1) has five subunits: alpha(3), beta(3), gamma(1), delta(1), epsilon(1). CF(0) has four main subunits: a(1), b(1), b'(1) and c(9-12).

Its subcellular location is the plastid. The protein localises to the chloroplast thylakoid membrane. It catalyses the reaction ATP + H2O + 4 H(+)(in) = ADP + phosphate + 5 H(+)(out). Functionally, produces ATP from ADP in the presence of a proton gradient across the membrane. The catalytic sites are hosted primarily by the beta subunits. This chain is ATP synthase subunit beta, chloroplastic, found in Pylaiella littoralis (Seaweed).